The following is a 159-amino-acid chain: Nucleoside diphosphate kinase (159 aa).

ATP is bound by residues K14, F62, R90, T96, and R107. The Pros-phosphohistidine intermediate role is filled by H123.

It belongs to the NDK family. It depends on Mg(2+) as a cofactor.

It localises to the cytoplasm. It carries out the reaction a 2'-deoxyribonucleoside 5'-diphosphate + ATP = a 2'-deoxyribonucleoside 5'-triphosphate + ADP. It catalyses the reaction a ribonucleoside 5'-diphosphate + ATP = a ribonucleoside 5'-triphosphate + ADP. Its function is as follows. Major role in the synthesis of nucleoside triphosphates other than ATP. The ATP gamma phosphate is transferred to the NDP beta phosphate via a ping-pong mechanism, using a phosphorylated active-site intermediate. This chain is Nucleoside diphosphate kinase, found in Pyrococcus abyssi (strain GE5 / Orsay).